Reading from the N-terminus, the 456-residue chain is Bifunctional protein GlmU (456 aa).

The tract at residues Met1–Lys228 is pyrophosphorylase. Residues Leu11–Gly14, Lys25, Gln75, Gly80–Thr81, Tyr102–Asp104, Gly138, Glu153, Asn168, and Asn226 each bind UDP-N-acetyl-alpha-D-glucosamine. A Mg(2+)-binding site is contributed by Asp104. Asn226 contributes to the Mg(2+) binding site. Residues Leu229–Ala249 are linker. Residues Gly250 to Gln456 form an N-acetyltransferase region. The UDP-N-acetyl-alpha-D-glucosamine site is built by Arg332 and Lys350. His362 functions as the Proton acceptor in the catalytic mechanism. UDP-N-acetyl-alpha-D-glucosamine-binding residues include Tyr365 and Asn376. Acetyl-CoA-binding positions include Ala379, Asn385–Tyr386, Ser404, Ala422, and Arg439.

The protein in the N-terminal section; belongs to the N-acetylglucosamine-1-phosphate uridyltransferase family. In the C-terminal section; belongs to the transferase hexapeptide repeat family. As to quaternary structure, homotrimer. Mg(2+) is required as a cofactor.

The protein resides in the cytoplasm. The catalysed reaction is alpha-D-glucosamine 1-phosphate + acetyl-CoA = N-acetyl-alpha-D-glucosamine 1-phosphate + CoA + H(+). It catalyses the reaction N-acetyl-alpha-D-glucosamine 1-phosphate + UTP + H(+) = UDP-N-acetyl-alpha-D-glucosamine + diphosphate. It participates in nucleotide-sugar biosynthesis; UDP-N-acetyl-alpha-D-glucosamine biosynthesis; N-acetyl-alpha-D-glucosamine 1-phosphate from alpha-D-glucosamine 6-phosphate (route II): step 2/2. It functions in the pathway nucleotide-sugar biosynthesis; UDP-N-acetyl-alpha-D-glucosamine biosynthesis; UDP-N-acetyl-alpha-D-glucosamine from N-acetyl-alpha-D-glucosamine 1-phosphate: step 1/1. Its pathway is bacterial outer membrane biogenesis; LPS lipid A biosynthesis. Functionally, catalyzes the last two sequential reactions in the de novo biosynthetic pathway for UDP-N-acetylglucosamine (UDP-GlcNAc). The C-terminal domain catalyzes the transfer of acetyl group from acetyl coenzyme A to glucosamine-1-phosphate (GlcN-1-P) to produce N-acetylglucosamine-1-phosphate (GlcNAc-1-P), which is converted into UDP-GlcNAc by the transfer of uridine 5-monophosphate (from uridine 5-triphosphate), a reaction catalyzed by the N-terminal domain. The sequence is that of Bifunctional protein GlmU from Neisseria meningitidis serogroup B (strain ATCC BAA-335 / MC58).